The sequence spans 326 residues: Tagatose 1,6-diphosphate aldolase (326 aa).

This sequence belongs to the aldolase LacD family.

It carries out the reaction D-tagatofuranose 1,6-bisphosphate = D-glyceraldehyde 3-phosphate + dihydroxyacetone phosphate. The protein operates within carbohydrate metabolism; D-tagatose 6-phosphate degradation; D-glyceraldehyde 3-phosphate and glycerone phosphate from D-tagatose 6-phosphate: step 2/2. The sequence is that of Tagatose 1,6-diphosphate aldolase from Staphylococcus aureus (strain Mu3 / ATCC 700698).